The primary structure comprises 218 residues: Large ribosomal subunit protein uL3 (218 aa).

This sequence belongs to the universal ribosomal protein uL3 family. Part of the 50S ribosomal subunit. Forms a cluster with proteins L14 and L19.

One of the primary rRNA binding proteins, it binds directly near the 3'-end of the 23S rRNA, where it nucleates assembly of the 50S subunit. This chain is Large ribosomal subunit protein uL3, found in Brachyspira pilosicoli (Serpulina pilosicoli).